A 71-amino-acid chain; its full sequence is BBSome-interacting protein 1 (71 aa).

This sequence belongs to the BBIP10 family.

The protein localises to the cell projection. It localises to the cilium. Its subcellular location is the cytoplasm. In terms of biological role, required for primary cilia assembly. The polypeptide is BBSome-interacting protein 1 (bbip1) (Nematostella vectensis (Starlet sea anemone)).